A 129-amino-acid chain; its full sequence is uncharacterized protein (129 aa).

The signal sequence occupies residues 1–27; it reads MLMRKKKLLSRISFGSLFLLCGTILSA. Cys-28 carries N-palmitoyl cysteine lipidation. Residue Cys-28 is the site of S-diacylglycerol cysteine attachment.

The protein belongs to the MG439/MG440 family.

It localises to the cell membrane. This is an uncharacterized protein from Mycoplasma pneumoniae (strain ATCC 29342 / M129 / Subtype 1) (Mycoplasmoides pneumoniae).